The sequence spans 96 residues: Ferredoxin (96 aa).

One can recognise a 2Fe-2S ferredoxin-type domain in the interval 4–94 (YKVKLLTPEG…DVVIETHKEE (91 aa)). The [2Fe-2S] cluster site is built by Cys40, Cys45, Cys48, and Cys78.

This sequence belongs to the 2Fe2S plant-type ferredoxin family. It depends on [2Fe-2S] cluster as a cofactor.

It localises to the plastid. The protein resides in the chloroplast. Its function is as follows. Ferredoxins are iron-sulfur proteins that transfer electrons in a wide variety of metabolic reactions. This chain is Ferredoxin, found in Panax ginseng (Korean ginseng).